Reading from the N-terminus, the 342-residue chain is Phosphate acyltransferase (342 aa).

Belongs to the PlsX family. As to quaternary structure, homodimer. Probably interacts with PlsY.

It is found in the cytoplasm. The enzyme catalyses a fatty acyl-[ACP] + phosphate = an acyl phosphate + holo-[ACP]. It functions in the pathway lipid metabolism; phospholipid metabolism. Its function is as follows. Catalyzes the reversible formation of acyl-phosphate (acyl-PO(4)) from acyl-[acyl-carrier-protein] (acyl-ACP). This enzyme utilizes acyl-ACP as fatty acyl donor, but not acyl-CoA. This Shewanella pealeana (strain ATCC 700345 / ANG-SQ1) protein is Phosphate acyltransferase.